The sequence spans 340 residues: Nod factor export ATP-binding protein I (340 aa).

Residues 1 to 24 (MLKRKLGPEDLRRLETPAIERESH) are compositionally biased toward basic and acidic residues. A disordered region spans residues 1–34 (MLKRKLGPEDLRRLETPAIERESHGQTSAKSSVP). Residues 25–34 (GQTSAKSSVP) show a composition bias toward polar residues. The region spanning 42 to 272 (VDFAGVTKSY…HIGCQVMEIY (231 aa)) is the ABC transporter domain. 74 to 81 (GPNGAGKS) is a binding site for ATP.

It belongs to the ABC transporter superfamily. Lipooligosaccharide exporter (TC 3.A.1.102) family. In terms of assembly, the complex is composed of two ATP-binding proteins (NodI) and two transmembrane proteins (NodJ).

It is found in the cell inner membrane. Its function is as follows. Part of the ABC transporter complex NodIJ involved in the export of the nodulation factors (Nod factors), the bacterial signal molecules that induce symbiosis and subsequent nodulation induction. Nod factors are LCO (lipo-chitin oligosaccharide), a modified beta-1,4-linked N-acetylglucosamine oligosaccharide. This subunit is responsible for energy coupling to the transport system. The chain is Nod factor export ATP-binding protein I from Mesorhizobium japonicum (strain LMG 29417 / CECT 9101 / MAFF 303099) (Mesorhizobium loti (strain MAFF 303099)).